The sequence spans 76 residues: Small ribosomal subunit protein bS18 (76 aa).

Belongs to the bacterial ribosomal protein bS18 family. As to quaternary structure, part of the 30S ribosomal subunit. Forms a tight heterodimer with protein bS6.

Its function is as follows. Binds as a heterodimer with protein bS6 to the central domain of the 16S rRNA, where it helps stabilize the platform of the 30S subunit. This chain is Small ribosomal subunit protein bS18, found in Symbiobacterium thermophilum (strain DSM 24528 / JCM 14929 / IAM 14863 / T).